Here is a 275-residue protein sequence, read N- to C-terminus: Testis-specific gene 13 protein (275 aa).

Over residues Met1–Ser20 the composition is skewed to polar residues. The segment at Met1–Met28 is disordered.

As to expression, testis-specific.

The chain is Testis-specific gene 13 protein (TSGA13) from Homo sapiens (Human).